The primary structure comprises 496 residues: Polyphosphate:AMP phosphotransferase (496 aa).

PPK2 stretches follow at residues 11–234 (IDKD…LQAA) and 269–495 (LDKD…YKKD).

This sequence belongs to the polyphosphate kinase 2 (PPK2) family. Class II subfamily. In terms of assembly, homodimer. Mg(2+) is required as a cofactor.

The catalysed reaction is [phosphate](n) + ADP = [phosphate](n+1) + AMP. Functionally, uses inorganic polyphosphate (polyP) as a donor to convert AMP to ADP. Can also convert GMP to GDP, with lower efficiency. Cannot dephosphorylate ADP in the presence of polyP. This is Polyphosphate:AMP phosphotransferase from Pseudomonas aeruginosa (strain ATCC 15692 / DSM 22644 / CIP 104116 / JCM 14847 / LMG 12228 / 1C / PRS 101 / PAO1).